A 137-amino-acid polypeptide reads, in one-letter code: 5-hydroxytryptamine receptor 4 (137 aa).

A helical membrane pass occupies residues Thr-12–Ile-35. N-linked (GlcNAc...) asparagine glycosylation occurs at Asn-58. A helical transmembrane segment spans residues Asn-67–Tyr-90. The tract at residues Ala-112–Lys-137 is disordered.

This sequence belongs to the G-protein coupled receptor 1 family. Interacts (via C-terminus 330-346 AA) with GRK5; this interaction is promoted by 5-HT (serotonin).

The protein resides in the cell membrane. It is found in the endosome membrane. In terms of biological role, G-protein coupled receptor for 5-hydroxytryptamine (serotonin), a biogenic hormone that functions as a neurotransmitter, a hormone and a mitogen. Ligand binding causes a conformation change that triggers signaling via guanine nucleotide-binding proteins (G proteins) and modulates the activity of downstream effectors. HTR4 is coupled to G(s) G alpha proteins and mediates activation of adenylate cyclase activity. The sequence is that of 5-hydroxytryptamine receptor 4 (HTR4) from Sus scrofa (Pig).